A 178-amino-acid polypeptide reads, in one-letter code: Large ribosomal subunit protein eL20x (178 aa).

It belongs to the eukaryotic ribosomal protein eL20 family.

The chain is Large ribosomal subunit protein eL20x (RPL18AC) from Arabidopsis thaliana (Mouse-ear cress).